A 248-amino-acid chain; its full sequence is Sugar fermentation stimulation protein homolog (248 aa).

This sequence belongs to the SfsA family.

The polypeptide is Sugar fermentation stimulation protein homolog (Prochlorococcus marinus subsp. pastoris (strain CCMP1986 / NIES-2087 / MED4)).